The sequence spans 364 residues: Paraneoplastic antigen Ma2 homolog (364 aa).

A2 is modified (N-acetylalanine). Residues 335-353 (EEEEASFENESIEEPEEGD) show a composition bias toward acidic residues. The disordered stretch occupies residues 335 to 364 (EEEEASFENESIEEPEEGDGYGGWNHEGDD). Gly residues predominate over residues 354-364 (GYGGWNHEGDD).

This sequence belongs to the PNMA family.

Its subcellular location is the nucleus. It is found in the nucleolus. This is Paraneoplastic antigen Ma2 homolog (PNMA2) from Macaca fascicularis (Crab-eating macaque).